The following is a 179-amino-acid chain: Large ribosomal subunit protein uL5 (179 aa).

The protein belongs to the universal ribosomal protein uL5 family. As to quaternary structure, part of the 50S ribosomal subunit; part of the 5S rRNA/L5/L18/L25 subcomplex. Contacts the 5S rRNA and the P site tRNA. Forms a bridge to the 30S subunit in the 70S ribosome.

In terms of biological role, this is one of the proteins that bind and probably mediate the attachment of the 5S RNA into the large ribosomal subunit, where it forms part of the central protuberance. In the 70S ribosome it contacts protein S13 of the 30S subunit (bridge B1b), connecting the 2 subunits; this bridge is implicated in subunit movement. Contacts the P site tRNA; the 5S rRNA and some of its associated proteins might help stabilize positioning of ribosome-bound tRNAs. The protein is Large ribosomal subunit protein uL5 of Citrifermentans bemidjiense (strain ATCC BAA-1014 / DSM 16622 / JCM 12645 / Bem) (Geobacter bemidjiensis).